Here is a 309-residue protein sequence, read N- to C-terminus: Probable lipid kinase YegS-like (309 aa).

The DAGKc domain maps to 1-134; it reads MAPSHWRVIL…VDLLRIDADH (134 aa). ATP-binding positions include T39, 65–71, and T96; that span reads GDGTLSE. Mg(2+) contacts are provided by L219, D222, and L224. The active-site Proton acceptor is E280.

Belongs to the diacylglycerol/lipid kinase family. YegS lipid kinase subfamily. The cofactor is Mg(2+). Ca(2+) serves as cofactor.

It is found in the cytoplasm. Functionally, probably phosphorylates lipids; the in vivo substrate is unknown. This Xanthomonas euvesicatoria pv. vesicatoria (strain 85-10) (Xanthomonas campestris pv. vesicatoria) protein is Probable lipid kinase YegS-like.